Here is a 129-residue protein sequence, read N- to C-terminus: Protein 2B* (129 aa).

2 disordered regions span residues 1–28 and 91–129; these read PFTF…NPTA and DCRD…RNSS. The span at 14 to 28 shows a compositional bias: polar residues; sequence DSRSGSVINGSNPTA. A compositionally biased stretch (low complexity) spans 99 to 113; the sequence is DASGPLDAALLGSLD. Over residues 114–129 the composition is skewed to basic and acidic residues; that stretch reads SSRDHKPDKPVRRNSS.

The protein belongs to the encephalomyocarditis virus protein 2B* family.

This Homo sapiens (Human) protein is Protein 2B*.